The sequence spans 372 residues: Beta-1,3-N-acetylglucosaminyltransferase radical fringe (372 aa).

Residues 1 to 10 (MNSSCLGLRR) lie on the Cytoplasmic side of the membrane. Residues 11 to 27 (TCFLLSVTAAAVLLLLL) traverse the membrane as a helical; Signal-anchor for type II membrane protein segment. The Lumenal segment spans residues 28 to 372 (PRGQPPAAPR…TIWCPNKKMS (345 aa)). A compositionally biased stretch (pro residues) spans 30-48 (GQPPAAPRRRPPPAGPSRP). A disordered region spans residues 30–96 (GQPPAAPRRR…RVRMGPPGGS (67 aa)). The span at 64–78 (DRGGGSGAAGGGRGV) shows a compositional bias: gly residues. R120 is a binding site for substrate. N159 carries N-linked (GlcNAc...) asparagine glycosylation. 2 disulfide bridges follow: C160-C171 and C189-C253. Residue D193 coordinates substrate. Residue D194 participates in Mn(2+) binding. The active site involves D283. H307 lines the Mn(2+) pocket. C357 and C366 are joined by a disulfide.

It belongs to the glycosyltransferase 31 family. Requires Mn(2+) as cofactor.

The protein resides in the golgi apparatus membrane. The enzyme catalyses 3-O-(alpha-L-fucosyl)-L-threonyl-[EGF-like domain protein] + UDP-N-acetyl-alpha-D-glucosamine = 3-O-(N-acetyl-beta-D-glucosaminyl-(1-&gt;3)-alpha-L-fucosyl)-L-threonyl-[EGF-like domain protein] + UDP + H(+). The catalysed reaction is 3-O-(alpha-L-fucosyl)-L-seryl-[EGF-like domain protein] + UDP-N-acetyl-alpha-D-glucosamine = 3-O-(N-acetyl-beta-D-glucosaminyl-(1-&gt;3)-alpha-L-fucosyl)-L-seryl-[EGF-like domain protein] + UDP + H(+). In terms of biological role, glycosyltransferase that initiates the elongation of O-linked fucose residues attached to EGF-like repeats in the extracellular domain of Notch molecules. Plays an important role in limb outgrowth, it directs the formation and positioning of the apical ectodermal ridge (AER), one of the key organizer centers of vertebrate limb development. This chain is Beta-1,3-N-acetylglucosaminyltransferase radical fringe (RFNG), found in Gallus gallus (Chicken).